We begin with the raw amino-acid sequence, 328 residues long: Probable tRNA-dihydrouridine synthase (328 aa).

18–20 (PME) is a binding site for FMN. Cys105 serves as the catalytic Proton donor. FMN-binding positions include Lys143, 208–210 (NGD), and 232–233 (GR).

It belongs to the Dus family. FMN is required as a cofactor.

It catalyses the reaction a 5,6-dihydrouridine in tRNA + NAD(+) = a uridine in tRNA + NADH + H(+). The catalysed reaction is a 5,6-dihydrouridine in tRNA + NADP(+) = a uridine in tRNA + NADPH + H(+). Functionally, catalyzes the synthesis of 5,6-dihydrouridine (D), a modified base found in the D-loop of most tRNAs, via the reduction of the C5-C6 double bond in target uridines. The polypeptide is Probable tRNA-dihydrouridine synthase (dus) (Staphylococcus aureus (strain Mu50 / ATCC 700699)).